Consider the following 37-residue polypeptide: Large ribosomal subunit protein bL36 (37 aa).

Positions 11, 14, 27, and 32 each coordinate Zn(2+).

This sequence belongs to the bacterial ribosomal protein bL36 family. Part of the 50S ribosomal subunit. Zn(2+) is required as a cofactor.

In terms of biological role, binds the 23S rRNA. In Deinococcus radiodurans (strain ATCC 13939 / DSM 20539 / JCM 16871 / CCUG 27074 / LMG 4051 / NBRC 15346 / NCIMB 9279 / VKM B-1422 / R1), this protein is Large ribosomal subunit protein bL36 (rpmJ).